A 345-amino-acid chain; its full sequence is UDP-3-O-acylglucosamine N-acyltransferase (345 aa).

Catalysis depends on histidine 241, which acts as the Proton acceptor.

It belongs to the transferase hexapeptide repeat family. LpxD subfamily. In terms of assembly, homotrimer.

It carries out the reaction a UDP-3-O-[(3R)-3-hydroxyacyl]-alpha-D-glucosamine + a (3R)-hydroxyacyl-[ACP] = a UDP-2-N,3-O-bis[(3R)-3-hydroxyacyl]-alpha-D-glucosamine + holo-[ACP] + H(+). The protein operates within bacterial outer membrane biogenesis; LPS lipid A biosynthesis. Its function is as follows. Catalyzes the N-acylation of UDP-3-O-acylglucosamine using 3-hydroxyacyl-ACP as the acyl donor. Is involved in the biosynthesis of lipid A, a phosphorylated glycolipid that anchors the lipopolysaccharide to the outer membrane of the cell. The sequence is that of UDP-3-O-acylglucosamine N-acyltransferase from Desulfotalea psychrophila (strain LSv54 / DSM 12343).